A 170-amino-acid polypeptide reads, in one-letter code: Alpha-crystallin A chain (170 aa).

Position 1 is an N-acetylmethionine (Met1). The segment at 1–63 (MDVTIQHPWF…RTALDSGISE (63 aa)) is required for complex formation with BFSP1 and BFSP2. Gln6 carries the deamidated glutamine; partial modification. A Phosphoserine modification is found at Ser45. Gln50 carries the post-translational modification Deamidated glutamine; partial. In terms of domain architecture, sHSP spans 52–161 (LFRTALDSGI…GERTIPVSRE (110 aa)). Lys99 is modified (N6-acetyllysine). Position 100 (His100) interacts with Zn(2+). Deamidated asparagine; partial is present on Asn101. Positions 102, 107, and 151 each coordinate Zn(2+). The tract at residues 144 to 170 (PKLVDPSHGERTIPVSREEKPSSAPSS) is disordered. Basic and acidic residues predominate over residues 148–164 (DPSHGERTIPVSREEKP). The O-linked (GlcNAc) serine glycan is linked to Ser159.

The protein belongs to the small heat shock protein (HSP20) family. In terms of assembly, heteromer composed of three CRYAA and one CRYAB subunits. Inter-subunit bridging via zinc ions enhances stability, which is crucial as there is no protein turn over in the lens. Can also form homodimers and homotetramers (dimers of dimers) which serve as the building blocks of homooligomers. Within homooligomers, the zinc-binding motif is created from residues of 3 different molecules. His-100 and Glu-102 from one molecule are ligands of the zinc ion, and His-107 and His-151 residues from additional molecules complete the site with tetrahedral coordination geometry. Part of a complex required for lens intermediate filament formation composed of BFSP1, BFSP2 and CRYAA. Acetylation at Lys-99 may increase chaperone activity. Post-translationally, undergoes age-dependent proteolytical cleavage at the C-terminus.

Its subcellular location is the cytoplasm. The protein resides in the nucleus. Its function is as follows. Contributes to the transparency and refractive index of the lens. Acts as a chaperone, preventing aggregation of various proteins under a wide range of stress conditions. Required for the correct formation of lens intermediate filaments as part of a complex composed of BFSP1, BFSP2 and CRYAA. The protein is Alpha-crystallin A chain (CRYAA) of Tamandua mexicana (Northern Tamandua).